The primary structure comprises 437 residues: Repulsive guidance molecule B (437 aa).

The first 45 residues, 1–45 (MGLRAAPSSAAAAAAEVEQRRSPGLCPPPLELLLLLLFSLGLLHA), serve as a signal peptide directing secretion. Asn120 carries an N-linked (GlcNAc...) asparagine glycan. The segment covering 121–133 (CSKDGPTSSTNPE) has biased composition (polar residues). The interval 121 to 153 (CSKDGPTSSTNPEVTHDPCNYHSHAGAREHRRG) is disordered. 2 disulfides stabilise this stretch: Cys139-Cys226 and Cys163-Cys312. Asn383 carries N-linked (GlcNAc...) asparagine glycosylation. Asn413 is lipidated: GPI-anchor amidated asparagine. A propeptide spans 414–437 (GTPRGGSDLSVSLGLTCLILIVFL) (removed in mature form).

This sequence belongs to the repulsive guidance molecule (RGM) family. In terms of assembly, homooligomer. Interacts with DRGX. Interacts with BMP2 and BMP4. Interacts with the BMP type I receptors ACVR1, BMPR1A and BMPR1B and with the BMP type II receptor ACVR2B. The functional complex with its receptor NEO1/neogenin appears to be a heterotetramer with a 2:2 stoichiometry, RGM molecules acting as staples that bring two NEO1 receptors together without interacting themselves, this arrangement leads to activation of downstream signaling via RhoA. In terms of processing, GPI-anchored. Post-translationally, autocatalytically cleaved at low pH; the two chains remain linked via two disulfide bonds.

It localises to the cell membrane. Its subcellular location is the membrane raft. Its function is as follows. Member of the repulsive guidance molecule (RGM) family that contributes to the patterning of the developing nervous system. Acts as a bone morphogenetic protein (BMP) coreceptor that potentiates BMP signaling. Promotes neuronal adhesion. May inhibit neurite outgrowth. In Homo sapiens (Human), this protein is Repulsive guidance molecule B.